The sequence spans 330 residues: uncharacterized protein (330 aa).

His257 is a catalytic residue.

It belongs to the IUNH family.

This is an uncharacterized protein from Schizosaccharomyces pombe (strain 972 / ATCC 24843) (Fission yeast).